Reading from the N-terminus, the 668-residue chain is MVKKGSWFSAIKRVFTPHSKEKLANEPERKSGKEKKKKGFGKLRHGETNSFLPIFREPSSIEKILGEAERDHNLVFRPPTPDRPNPYSASPPPRPASPRVASPRPTSPRVASPRVPSPRAEVPRTLSPKPPSPRAEVPRSLSPKPPSPRADLPRSLSPKPFDRSKPSSASANAPPTLRPASTRVPSQRITPHSVPSPRPSSPRGASPQAISSKPPSPRAEPPTLDTPRPPSPRAASLRADPPRLDAARPTTPRPPSPLADAPRLDAPRPTTPKPPSPRSDPPRLDAPRPTTPKPPSPRSVSPRAVQRREIVYRPEPTLPVQHASATKIQGAFRGYMARKSFRALKGLVRLQGVVRGYSVKRQTINAMKYMQQVVRVQSQIQSRRIKMLENQAQVEKDEAKWAASEAGNDNWDDSVLTKEERDSRSQRKTDAIIKRERSMAYAYSRKLWKNSPKSTQDNRSFPQWWNWVDRQNPLASPAPSYSQPQRDFRLTPSRLCPSPLSQSSKQHHIRLDNHFDTSTPRSSRSTFHTPSRPIHTGTSRYSRGRLRGQDSPFKDDDSLTSCPPFPSYMAPTVSAKAKVRPNSNPKERVMGTPVSEKRRMSYPPTQDTFRWNKGSLVMSNSSSHRGPGSPGGVVLEKHKTLKSVGNLSIGSTASMATTVGRKEFNRFV.

The tract at residues 1 to 11 (MVKKGSWFSAI) is calmodulin-binding. Disordered regions lie at residues 16–54 (TPHSKEKLANEPERKSGKEKKKKGFGKLRHGETNSFLPI) and 66–305 (GEAE…PRAV). The segment covering 18–31 (HSKEKLANEPERKS) has biased composition (basic and acidic residues). Residues 32-43 (GKEKKKKGFGKL) show a composition bias toward basic residues. The segment covering 78–96 (PPTPDRPNPYSASPPPRPA) has biased composition (pro residues). Composition is skewed to low complexity over residues 97–120 (SPRVASPRPTSPRVASPRVPSPRA) and 166–175 (PSSASANAPP). Pro residues predominate over residues 269–279 (PTTPKPPSPRS). IQ domains are found at residues 321–350 (QHASATKIQGAFRGYMARKSFRALKGLVRL) and 343–372 (ALKGLVRLQGVVRGYSVKRQTINAMKYMQQ). 2 disordered regions span residues 399–431 (AKWAASEAGNDNWDDSVLTKEERDSRSQRKTDA) and 476–561 (SPAP…SLTS). The span at 415-431 (VLTKEERDSRSQRKTDA) shows a compositional bias: basic and acidic residues. A compositionally biased stretch (polar residues) spans 516 to 529 (DTSTPRSSRSTFHT).

This sequence belongs to the IQD family. In terms of assembly, binds to multiple calmodulin (CaM) in the presence of Ca(2+) and CaM-like proteins. As to expression, expressed in hypocotyls, cotyledons, leaves and petioles.

Its subcellular location is the cell membrane. It is found in the cytoplasm. It localises to the cytoskeleton. Its function is as follows. May be involved in cooperative interactions with calmodulins or calmodulin-like proteins. Recruits calmodulin proteins to microtubules, thus being a potential scaffold in cellular signaling and trafficking. Regulates cell and organ shapes (prevents twisting) in aerial parts probably by regulating transverse microtubules (MT) arrays alignment. Regulates the formation of oval xylem secondary cell-wall deposition pits through microtubule-dependent lateral inhibition of Rho GTPase domains, thus confining the area of active ROP domains within the lattice of the cortical microtubules. May associate with nucleic acids and regulate gene expression at the transcriptional or post-transcriptional level. The protein is Protein IQ-DOMAIN 14 of Arabidopsis thaliana (Mouse-ear cress).